Here is a 348-residue protein sequence, read N- to C-terminus: dTDP-glucose 4,6-dehydratase (348 aa).

NAD(+) is bound by residues 15–16 (FI), 37–40 (DKLT), 62–63 (DI), and 82–86 (YAAES). Ser-86 and Asn-88 together coordinate substrate. Thr-101 serves as a coordination point for NAD(+). Thr-125 is a substrate binding site. Residue Asp-126 is the Proton donor of the active site. Active-site proton acceptor residues include Glu-127 and Tyr-161. Position 161 to 165 (161 to 165 (YSSTK)) interacts with NAD(+). A substrate-binding site is contributed by Asn-190. Position 191 (Asn-191) interacts with NAD(+). Substrate-binding positions include 200–205 (KFIPRQ), 216–218 (KLY), Arg-225, Asn-260, and 283–287 (DRAGH).

The protein belongs to the NAD(P)-dependent epimerase/dehydratase family. dTDP-glucose dehydratase subfamily. In terms of assembly, homodimer. Requires NAD(+) as cofactor.

It catalyses the reaction dTDP-alpha-D-glucose = dTDP-4-dehydro-6-deoxy-alpha-D-glucose + H2O. It participates in carbohydrate biosynthesis; dTDP-L-rhamnose biosynthesis. In terms of biological role, catalyzes the dehydration of dTDP-D-glucose to form dTDP-6-deoxy-D-xylo-4-hexulose via a three-step process involving oxidation, dehydration and reduction. In Streptococcus mutans serotype c (strain ATCC 700610 / UA159), this protein is dTDP-glucose 4,6-dehydratase (rmlB).